Consider the following 320-residue polypeptide: Acyl-coenzyme A thioesterase 8 (320 aa).

Residues aspartate 233, serine 255, and glutamine 305 each act as charge relay system in the active site. Residues 318–320 carry the Microbody targeting signal motif; the sequence is SKL.

It belongs to the C/M/P thioester hydrolase family. In terms of assembly, homodimer. As to expression, ubiquitous.

The protein resides in the peroxisome matrix. The enzyme catalyses choloyl-CoA + H2O = cholate + CoA + H(+). It catalyses the reaction chenodeoxycholoyl-CoA + H2O = chenodeoxycholate + CoA + H(+). It carries out the reaction acetyl-CoA + H2O = acetate + CoA + H(+). The catalysed reaction is malonyl-CoA + H2O = malonate + CoA + H(+). The enzyme catalyses acetoacetyl-CoA + H2O = acetoacetate + CoA + H(+). It catalyses the reaction propanoyl-CoA + H2O = propanoate + CoA + H(+). It carries out the reaction butanoyl-CoA + H2O = butanoate + CoA + H(+). The catalysed reaction is succinyl-CoA + H2O = succinate + CoA + H(+). The enzyme catalyses glutaryl-CoA + H2O = glutarate + CoA + H(+). It catalyses the reaction hexanoyl-CoA + H2O = hexanoate + CoA + H(+). It carries out the reaction hexanedioyl-CoA + H2O = hexanedioate + CoA + H(+). The catalysed reaction is octanoyl-CoA + H2O = octanoate + CoA + H(+). The enzyme catalyses octanedioyl-CoA + H2O = octanedioate + CoA + H(+). It catalyses the reaction decanoyl-CoA + H2O = decanoate + CoA + H(+). It carries out the reaction decanedioyl-CoA + H2O = decanedioate + CoA + H(+). The catalysed reaction is dodecanoyl-CoA + H2O = dodecanoate + CoA + H(+). The enzyme catalyses dodecanedioyl-CoA + H2O = dodecanedioate + CoA + H(+). It catalyses the reaction tetradecanoyl-CoA + H2O = tetradecanoate + CoA + H(+). It carries out the reaction (9Z)-tetradecenoyl-CoA + H2O = (9Z)-tetradecenoate + CoA + H(+). The catalysed reaction is hexadecanoyl-CoA + H2O = hexadecanoate + CoA + H(+). The enzyme catalyses (9Z)-hexadecenoyl-CoA + H2O = (9Z)-hexadecenoate + CoA + H(+). It catalyses the reaction octadecanoyl-CoA + H2O = octadecanoate + CoA + H(+). It carries out the reaction (9Z)-octadecenoyl-CoA + H2O = (9Z)-octadecenoate + CoA + H(+). The catalysed reaction is (9Z,12Z)-octadecadienoyl-CoA + H2O = (9Z,12Z)-octadecadienoate + CoA + H(+). The enzyme catalyses eicosanoyl-CoA + H2O = eicosanoate + CoA + H(+). It catalyses the reaction (5Z,8Z,11Z,14Z)-eicosatetraenoyl-CoA + H2O = (5Z,8Z,11Z,14Z)-eicosatetraenoate + CoA + H(+). It carries out the reaction 4,8-dimethylnonanoyl-CoA + H2O = 4,8-dimethylnonanoate + CoA + H(+). The catalysed reaction is 2,6-dimethylheptanoyl-CoA + H2O = 2,6-dimethylheptanoate + CoA + H(+). The enzyme catalyses (3S)-3-hydroxy-3-methylglutaryl-CoA + H2O = 3-hydroxy-3-methylglutarate + CoA + H(+). It catalyses the reaction 3alpha,7alpha,12alpha-trihydroxy-5beta-cholestan-26-oyl-CoA + H2O = 3alpha,7alpha,12alpha-trihydroxy-5beta-cholestan-26-oate + CoA + H(+). It carries out the reaction 2-methyloctadecanoyl-CoA + H2O = 2-methyloctadecanoate + CoA + H(+). The catalysed reaction is prostaglandin F2alpha-CoA + H2O = prostaglandin F2alpha + CoA + H(+). It functions in the pathway lipid metabolism; fatty acid metabolism. Inhibited by CoASH (IC(50)=10-15 uM). Also inhibited by cysteine-reactive agents. In terms of biological role, catalyzes the hydrolysis of acyl-CoAs into free fatty acids and coenzyme A (CoASH), regulating their respective intracellular levels. Displays no strong substrate specificity with respect to the carboxylic acid moiety of Acyl-CoAs. Hydrolyzes medium length (C2 to C20) straight-chain, saturated and unsaturated acyl-CoAS but is inactive towards substrates with longer aliphatic chains. Moreover, it catalyzes the hydrolysis of CoA esters of bile acids, such as choloyl-CoA and chenodeoxycholoyl-CoA and competes with bile acid CoA:amino acid N-acyltransferase (BAAT). Is also able to hydrolyze CoA esters of dicarboxylic acids. It is involved in the metabolic regulation of peroxisome proliferation. This is Acyl-coenzyme A thioesterase 8 (Acot8) from Mus musculus (Mouse).